Reading from the N-terminus, the 375-residue chain is Porin Omp2b (375 aa).

A signal peptide spans 1 to 22; it reads MNIKSLLLGSAAALVAASGAQA.

This sequence belongs to the alphaproteobacteria porin family. In terms of assembly, homotrimer.

Its subcellular location is the cell outer membrane. In terms of biological role, forms passive diffusion pores that allow small molecular weight hydrophilic materials across the outer membrane. This is Porin Omp2b (omp2b) from Brucella suis.